The primary structure comprises 367 residues: Probable dual-specificity RNA methyltransferase RlmN (367 aa).

The active-site Proton acceptor is glutamate 92. Residues 98–326 (QEYGLSVCVT…YDTLKKNGIN (229 aa)) enclose the Radical SAM core domain. A disulfide bridge links cysteine 105 with cysteine 341. The [4Fe-4S] cluster site is built by cysteine 112, cysteine 116, and cysteine 119. Residues 164-165 (GE), serine 196, 219-221 (SLH), and asparagine 297 each bind S-adenosyl-L-methionine. Cysteine 341 functions as the S-methylcysteine intermediate in the catalytic mechanism.

This sequence belongs to the radical SAM superfamily. RlmN family. It depends on [4Fe-4S] cluster as a cofactor.

It is found in the cytoplasm. The catalysed reaction is adenosine(2503) in 23S rRNA + 2 reduced [2Fe-2S]-[ferredoxin] + 2 S-adenosyl-L-methionine = 2-methyladenosine(2503) in 23S rRNA + 5'-deoxyadenosine + L-methionine + 2 oxidized [2Fe-2S]-[ferredoxin] + S-adenosyl-L-homocysteine. It carries out the reaction adenosine(37) in tRNA + 2 reduced [2Fe-2S]-[ferredoxin] + 2 S-adenosyl-L-methionine = 2-methyladenosine(37) in tRNA + 5'-deoxyadenosine + L-methionine + 2 oxidized [2Fe-2S]-[ferredoxin] + S-adenosyl-L-homocysteine. Its function is as follows. Specifically methylates position 2 of adenine 2503 in 23S rRNA and position 2 of adenine 37 in tRNAs. This is Probable dual-specificity RNA methyltransferase RlmN from Listeria innocua serovar 6a (strain ATCC BAA-680 / CLIP 11262).